Consider the following 334-residue polypeptide: Coiled-coil domain-containing protein 89 (334 aa).

Residues 75–318 are a coiled coil; sequence EAAQRFQSER…EAYKKHSGDL (244 aa).

It belongs to the CCDC89 family. In terms of assembly, interacts (via C-terminus) with hey1/bc8 (via Orange domain). In terms of tissue distribution, in adults, expressed at varying levels in different organs including the liver and brain, with highest expression in the testis.

It localises to the cytoplasm. The protein localises to the nucleus. In Xenopus laevis (African clawed frog), this protein is Coiled-coil domain-containing protein 89.